A 237-amino-acid chain; its full sequence is Phosphoribosylaminoimidazole-succinocarboxamide synthase (237 aa).

This sequence belongs to the SAICAR synthetase family.

The enzyme catalyses 5-amino-1-(5-phospho-D-ribosyl)imidazole-4-carboxylate + L-aspartate + ATP = (2S)-2-[5-amino-1-(5-phospho-beta-D-ribosyl)imidazole-4-carboxamido]succinate + ADP + phosphate + 2 H(+). Its pathway is purine metabolism; IMP biosynthesis via de novo pathway; 5-amino-1-(5-phospho-D-ribosyl)imidazole-4-carboxamide from 5-amino-1-(5-phospho-D-ribosyl)imidazole-4-carboxylate: step 1/2. The sequence is that of Phosphoribosylaminoimidazole-succinocarboxamide synthase from Listeria welshimeri serovar 6b (strain ATCC 35897 / DSM 20650 / CCUG 15529 / CIP 8149 / NCTC 11857 / SLCC 5334 / V8).